A 202-amino-acid chain; its full sequence is Outer-membrane lipoprotein carrier protein (202 aa).

The signal sequence occupies residues 1 to 20 (MKKQLLIGSVLLVASSQVWA).

It belongs to the LolA family. As to quaternary structure, monomer.

It localises to the periplasm. Functionally, participates in the translocation of lipoproteins from the inner membrane to the outer membrane. Only forms a complex with a lipoprotein if the residue after the N-terminal Cys is not an aspartate (The Asp acts as a targeting signal to indicate that the lipoprotein should stay in the inner membrane). This is Outer-membrane lipoprotein carrier protein from Aeromonas salmonicida (strain A449).